Reading from the N-terminus, the 194-residue chain is Imidazoleglycerol-phosphate dehydratase (194 aa).

The protein belongs to the imidazoleglycerol-phosphate dehydratase family.

It is found in the cytoplasm. It catalyses the reaction D-erythro-1-(imidazol-4-yl)glycerol 3-phosphate = 3-(imidazol-4-yl)-2-oxopropyl phosphate + H2O. The protein operates within amino-acid biosynthesis; L-histidine biosynthesis; L-histidine from 5-phospho-alpha-D-ribose 1-diphosphate: step 6/9. This chain is Imidazoleglycerol-phosphate dehydratase, found in Bacillus subtilis (strain 168).